Here is a 103-residue protein sequence, read N- to C-terminus: Antitoxin VapB1 (103 aa).

Antitoxin component of a type II toxin-antitoxin (TA) system. Upon expression in E.coli neutralizes the effect of cognate toxin VapC1, partially inhibits the RNase activity of VapC1 in vitro. This Rickettsia felis (strain ATCC VR-1525 / URRWXCal2) (Rickettsia azadi) protein is Antitoxin VapB1 (vapB1).